The primary structure comprises 78 residues: uncharacterized protein (78 aa).

The tract at residues 49–78 (QRASLERSNSIRNLQSQGKRRSDSKESRKL) is disordered. Over residues 54–65 (ERSNSIRNLQSQ) the composition is skewed to polar residues. Basic and acidic residues predominate over residues 68 to 78 (RRSDSKESRKL).

This is an uncharacterized protein from Saccharomyces cerevisiae (strain ATCC 204508 / S288c) (Baker's yeast).